Consider the following 214-residue polypeptide: Large ribosomal subunit protein uL1 (214 aa).

It belongs to the universal ribosomal protein uL1 family. Part of the 50S ribosomal subunit.

Its function is as follows. Binds directly to 23S rRNA. Probably involved in E site tRNA release. Protein L1 is also a translational repressor protein, it controls the translation of its operon by binding to its mRNA. This chain is Large ribosomal subunit protein uL1, found in Methanopyrus kandleri (strain AV19 / DSM 6324 / JCM 9639 / NBRC 100938).